Reading from the N-terminus, the 174-residue chain is Chromophore lyase CpcS/CpeS 1 (174 aa).

The protein belongs to the CpcS/CpeS biliprotein lyase family.

Covalently attaches a chromophore to Cys residue(s) of phycobiliproteins. This Trichodesmium erythraeum (strain IMS101) protein is Chromophore lyase CpcS/CpeS 1.